A 271-amino-acid chain; its full sequence is MSDEEVEHVEEEYEEEEEAQEEAPPPPAEVHEVHEEVHEVHEPEEVQEEEKPRPKLTAPKIPEGEKVDFDDIQKKRQNKDLMELQALIDSHFEARKKEEEELVALKERIEKRRAERAEQQRIRAEKERERQNRLAEEKARREEEEAKRRAEDDLKKKKALSSMGANYSSYLAKADQKRGKKQTAREMKKKVLAERRKPLNIDHLSEDKLRDKAKELWDALYQLEIDKFEYGEKLKRQKYDIINLRSRIDQAQKHSKKAGTTPKGKVGGRWK.

Residues 1 to 21 (MSDEEVEHVEEEYEEEEEAQE) show a composition bias toward acidic residues. The disordered stretch occupies residues 1–74 (MSDEEVEHVE…EKVDFDDIQK (74 aa)). Residue serine 2 is modified to N-acetylserine. Serine 2 carries the phosphoserine modification. Basic and acidic residues-rich tracts occupy residues 29-53 (EVHE…EKPR) and 62-74 (PEGE…DIQK). Serine 90 carries the phosphoserine modification. The span at 113 to 155 (RAERAEQQRIRAEKERERQNRLAEEKARREEEEAKRRAEDDLK) shows a compositional bias: basic and acidic residues. The segment at 113 to 192 (RAERAEQQRI…TAREMKKKVL (80 aa)) is disordered. A phosphoserine mark is found at serine 161, serine 168, and serine 169. Positions 183-192 (TAREMKKKVL) are enriched in basic and acidic residues. At serine 205 the chain carries Phosphoserine. Position 221 is a phosphotyrosine (tyrosine 221). Positions 249 to 271 (DQAQKHSKKAGTTPKGKVGGRWK) are disordered.

The protein belongs to the troponin T family.

Troponin T is the tropomyosin-binding subunit of troponin, the thin filament regulatory complex which confers calcium-sensitivity to striated muscle actomyosin ATPase activity. The sequence is that of Troponin T, fast skeletal muscle (TNNT3) from Sus scrofa (Pig).